Here is a 505-residue protein sequence, read N- to C-terminus: ATP synthase subunit alpha, chloroplastic (505 aa).

170-177 (GDRQTGKT) serves as a coordination point for ATP.

Belongs to the ATPase alpha/beta chains family. As to quaternary structure, F-type ATPases have 2 components, CF(1) - the catalytic core - and CF(0) - the membrane proton channel. CF(1) has five subunits: alpha(3), beta(3), gamma(1), delta(1), epsilon(1). CF(0) has four main subunits: a, b, b' and c.

It localises to the plastid. The protein resides in the chloroplast thylakoid membrane. The catalysed reaction is ATP + H2O + 4 H(+)(in) = ADP + phosphate + 5 H(+)(out). Functionally, produces ATP from ADP in the presence of a proton gradient across the membrane. The alpha chain is a regulatory subunit. The chain is ATP synthase subunit alpha, chloroplastic from Carica papaya (Papaya).